A 154-amino-acid polypeptide reads, in one-letter code: UPF0178 protein Sala_2376 (154 aa).

It belongs to the UPF0178 family.

This chain is UPF0178 protein Sala_2376, found in Sphingopyxis alaskensis (strain DSM 13593 / LMG 18877 / RB2256) (Sphingomonas alaskensis).